Consider the following 23-residue polypeptide: SIPASQKANLGNQMIMAVACYQN.

Homodimer.

The protein localises to the cytoplasm. This Arthrobacter sp. (strain KM) protein is NADP phosphatase 2.